The primary structure comprises 1242 residues: DNA-directed RNA polymerase RPB2 homolog (1242 aa).

The C4-type zinc-finger motif lies at 1180-1201 (CRNCGEPAIYNASHPIYKCMNC).

Belongs to the RNA polymerase beta chain family. Part of the viral DNA-directed RNA polymerase that consists of 8 polII-like subunits (RPB1, RPB2, RPB3, RPB5, RPB6, RPB7, RPB9, RPB10), a capping enzyme and a termination factor.

The protein localises to the host cytoplasm. The protein resides in the virion. The enzyme catalyses RNA(n) + a ribonucleoside 5'-triphosphate = RNA(n+1) + diphosphate. Functionally, catalytic component of the DNA-directed RNA polymerase (RNAP) that catalyzes the transcription in the cytoplasm of viral DNA into RNA using the four ribonucleoside triphosphates as substrates. Forms the polymerase active center together with RPB1. Part of the core element with the central large cleft, the clamp element that moves to open and close the cleft and the jaws that are thought to grab the incoming DNA template. This chain is DNA-directed RNA polymerase RPB2 homolog, found in Ornithodoros (relapsing fever ticks).